The primary structure comprises 499 residues: U4/U6 small nuclear ribonucleoprotein Prp31 (499 aa).

Positions 1–43 (MSLADELLADLEEAAEEEEGGSYGEEEEEPAIEDVQEETQLDL) are disordered. Acidic residues predominate over residues 7 to 40 (LLADLEEAAEEEEGGSYGEEEEEPAIEDVQEETQ). 2 coiled-coil regions span residues 85 to 120 (EAAPEYRVIVDANNLTVEIENELNIIHKFIRDKYSK) and 181 to 215 (DEELERLEEACDMALELNASKHRIYEYVESRMSFI). The 119-residue stretch at 215–333 (IAPNLSIIIG…IERKFDKWQE (119 aa)) folds into the Nop domain. Residues 334–357 (PPPVKQVKPLPAPLDGQRKKRGGR) are disordered. A Nuclear localization signal (NLS) motif is present at residues 351–364 (RKKRGGRRYRKMKE). Phosphoserine occurs at positions 379, 395, and 432. Position 438 is an N6-acetyllysine (Lys-438). Phosphoserine is present on Ser-439. Thr-440 carries the phosphothreonine modification. The residue at position 450 (Ser-450) is a Phosphoserine. Thr-455 is subject to Phosphothreonine. Glycyl lysine isopeptide (Lys-Gly) (interchain with G-Cter in SUMO2) cross-links involve residues Lys-471 and Lys-478.

The protein belongs to the PRP31 family. Identified in the spliceosome B complex. Component of the U4/U6-U5 tri-snRNP complex composed of the U4, U6 and U5 snRNAs and at least PRPF3, PRPF4, PRPF6, PRPF8, PRPF31, SNRNP200, TXNL4A, SNRNP40, DDX23, CD2BP2, PPIH, SNU13, EFTUD2, SART1 and USP39. Interacts with a complex formed by SNU13 and U4 snRNA, but not with SNU13 or U4 snRNA alone. The complex formed by SNU13 and PRPF31 also binds U4atac snRNA, a characteristic component of specific, less abundant spliceosomal complexes. Interacts with PRPF6/U5 snRNP-associated 102 kDa protein. Component of some MLL1/MLL complex, at least composed of the core components KMT2A/MLL1, ASH2L, HCFC1/HCF1, WDR5 and RBBP5, as well as the facultative components BACC1, CHD8, E2F6, HSP70, INO80C, KANSL1, LAS1L, MAX, MCRS1, MGA, KAT8/MOF, PELP1, PHF20, PRP31, RING2, RUVB1/TIP49A, RUVB2/TIP49B, SENP3, TAF1, TAF4, TAF6, TAF7, TAF9 and TEX10. Interacts (via its NLS) with CTNNBL1. Interacts with USH1G. In terms of processing, phosphorylated by PRP4K during spliceosome assembly.

It localises to the nucleus. The protein resides in the nucleus speckle. Its subcellular location is the cajal body. Functionally, involved in pre-mRNA splicing as component of the spliceosome. Required for the assembly of the U4/U5/U6 tri-snRNP complex, one of the building blocks of the spliceosome. The chain is U4/U6 small nuclear ribonucleoprotein Prp31 (Prpf31) from Mus musculus (Mouse).